The sequence spans 650 residues: DNA gyrase subunit B (650 aa).

Residues 400 to 414 (RRSQEARELTRRKSP) show a composition bias toward basic and acidic residues. Residues 400–422 (RRSQEARELTRRKSPFDSGSLPG) are disordered. Positions 435–549 (SELYIVEGDS…QGNIYIAQPP (115 aa)) constitute a Toprim domain. Mg(2+) contacts are provided by Glu-441, Asp-514, and Asp-516.

The protein belongs to the type II topoisomerase GyrB family. As to quaternary structure, heterotetramer, composed of two GyrA and two GyrB chains. In the heterotetramer, GyrA contains the active site tyrosine that forms a transient covalent intermediate with DNA, while GyrB binds cofactors and catalyzes ATP hydrolysis. Mg(2+) is required as a cofactor. It depends on Mn(2+) as a cofactor. Ca(2+) serves as cofactor.

The protein resides in the cytoplasm. The enzyme catalyses ATP-dependent breakage, passage and rejoining of double-stranded DNA.. In terms of biological role, a type II topoisomerase that negatively supercoils closed circular double-stranded (ds) DNA in an ATP-dependent manner to modulate DNA topology and maintain chromosomes in an underwound state. Negative supercoiling favors strand separation, and DNA replication, transcription, recombination and repair, all of which involve strand separation. Also able to catalyze the interconversion of other topological isomers of dsDNA rings, including catenanes and knotted rings. Type II topoisomerases break and join 2 DNA strands simultaneously in an ATP-dependent manner. The protein is DNA gyrase subunit B of Mycoplasma pneumoniae (strain ATCC 29342 / M129 / Subtype 1) (Mycoplasmoides pneumoniae).